The sequence spans 708 residues: Metal-pseudopaline receptor CntO (708 aa).

A signal peptide spans 1–21 (MRVSVSLVLGVGLGCSSPALW). One can recognise a TBDR plug domain in the interval 63 to 169 (RIEDIPQAIS…PGGTVNLVTK (107 aa)). Positions 174–708 (ERFARLHASA…NLTMSLTLNY (535 aa)) constitute a TBDR beta-barrel domain.

The protein belongs to the TonB-dependent receptor family.

It localises to the cell outer membrane. Functionally, transports the metallophore pseudopaline, which is involved in the acquisition of nickel and zinc, and thus enables bacterial growth inside the host, where metal access is limited. Is probably involved in the import of pseudopaline-metal complexes. The polypeptide is Metal-pseudopaline receptor CntO (Pseudomonas aeruginosa (strain ATCC 15692 / DSM 22644 / CIP 104116 / JCM 14847 / LMG 12228 / 1C / PRS 101 / PAO1)).